Here is a 345-residue protein sequence, read N- to C-terminus: Probable deoxyhypusine synthase 2 (345 aa).

Lys292 functions as the Nucleophile in the catalytic mechanism.

Belongs to the deoxyhypusine synthase family. It depends on NAD(+) as a cofactor.

It carries out the reaction [eIF5A protein]-L-lysine + spermidine = [eIF5A protein]-deoxyhypusine + propane-1,3-diamine. The protein operates within protein modification; eIF5A hypusination. Its function is as follows. Catalyzes the NAD-dependent oxidative cleavage of spermidine and the subsequent transfer of the butylamine moiety of spermidine to the epsilon-amino group of a specific lysine residue of the eIF-5A precursor protein to form the intermediate deoxyhypusine residue. This is Probable deoxyhypusine synthase 2 (dys2) from Methanosarcina acetivorans (strain ATCC 35395 / DSM 2834 / JCM 12185 / C2A).